Reading from the N-terminus, the 307-residue chain is Alpha N-terminal protein methyltransferase 1 (307 aa).

Over residues 38 to 54 (EPAPAPAAGSNGVAGEQ) the composition is skewed to low complexity. The tract at residues 38–60 (EPAPAPAAGSNGVAGEQEAGGGG) is disordered. Residues Gly123, Arg128, 145 to 147 (EPV), 179 to 180 (LQ), and Gln195 contribute to the S-adenosyl-L-methionine site.

The protein belongs to the methyltransferase superfamily. NTM1 family.

The enzyme catalyses N-terminal L-alanyl-L-prolyl-L-lysyl-[protein] + 3 S-adenosyl-L-methionine = N-terminal N,N,N-trimethyl-L-alanyl-L-prolyl-L-lysyl-[protein] + 3 S-adenosyl-L-homocysteine + 3 H(+). It carries out the reaction N-terminal L-seryl-L-prolyl-L-lysyl-[protein] + 3 S-adenosyl-L-methionine = N-terminal N,N,N-trimethyl-L-seryl-L-prolyl-L-lysyl-[protein] + 3 S-adenosyl-L-homocysteine + 3 H(+). It catalyses the reaction N-terminal L-prolyl-L-prolyl-L-lysyl-[protein] + 2 S-adenosyl-L-methionine = N-terminal N,N-dimethyl-L-prolyl-L-prolyl-L-lysyl-[protein] + 2 S-adenosyl-L-homocysteine + 2 H(+). Its function is as follows. Alpha-N-methyltransferase that methylates the N-terminus of target proteins containing the N-terminal motif [Ala/Pro/Ser]-Pro-Lys when the initiator Met is cleaved. Specifically catalyzes mono-, di- or tri-methylation of exposed alpha-amino group of Ala or Ser residue in the [Ala/Ser]-Pro-Lys motif and mono- or di-methylation of Pro in the Pro-Pro-Lys motif. The chain is Alpha N-terminal protein methyltransferase 1 from Oryza sativa subsp. indica (Rice).